A 107-amino-acid polypeptide reads, in one-letter code: Class I hydrophobin 3 (107 aa).

The signal sequence occupies residues Met1 to Ala18. 4 disulfides stabilise this stretch: Cys26-Cys86, Cys33-Cys80, Cys34-Cys67, and Cys87-Cys100. 2 N-linked (GlcNAc...) asparagine glycosylation sites follow: Asn35 and Asn89.

This sequence belongs to the fungal hydrophobin family. Self-assembles to form functional amyloid fibrils called rodlets. Self-assembly into fibrillar rodlets occurs spontaneously at hydrophobic:hydrophilic interfaces and the rodlets further associate laterally to form amphipathic monolayers.

Its subcellular location is the secreted. It is found in the cell wall. Aerial growth, conidiation, and dispersal of filamentous fungi in the environment rely upon a capability of their secreting small amphipathic proteins called hydrophobins (HPBs) with low sequence identity. Class I can self-assemble into an outermost layer of rodlet bundles on aerial cell surfaces, conferring cellular hydrophobicity that supports fungal growth, development and dispersal; whereas Class II form highly ordered films at water-air interfaces through intermolecular interactions but contribute nothing to the rodlet structure. Pnh3 is a class I hydrophobin that might be involved in the attachment of the hydrophilic wall of hyphae to the hydrophobic surface of wood under inorganic phosphate (Pi)-deficient conditions and enable the mycelium to degrade efficiently the components of wood and to acquire nutrients containing Pi. The sequence is that of Class I hydrophobin 3 from Pholiota nameko.